Consider the following 186-residue polypeptide: ATP synthase subunit delta (186 aa).

Belongs to the ATPase delta chain family. In terms of assembly, F-type ATPases have 2 components, F(1) - the catalytic core - and F(0) - the membrane proton channel. F(1) has five subunits: alpha(3), beta(3), gamma(1), delta(1), epsilon(1). CF(0) has four main subunits: a(1), b(1), b'(1) and c(10-14). The alpha and beta chains form an alternating ring which encloses part of the gamma chain. F(1) is attached to F(0) by a central stalk formed by the gamma and epsilon chains, while a peripheral stalk is formed by the delta, b and b' chains.

Its subcellular location is the cell inner membrane. F(1)F(0) ATP synthase produces ATP from ADP in the presence of a proton or sodium gradient. F-type ATPases consist of two structural domains, F(1) containing the extramembraneous catalytic core and F(0) containing the membrane proton channel, linked together by a central stalk and a peripheral stalk. During catalysis, ATP synthesis in the catalytic domain of F(1) is coupled via a rotary mechanism of the central stalk subunits to proton translocation. Functionally, this protein is part of the stalk that links CF(0) to CF(1). It either transmits conformational changes from CF(0) to CF(1) or is implicated in proton conduction. This Dinoroseobacter shibae (strain DSM 16493 / NCIMB 14021 / DFL 12) protein is ATP synthase subunit delta.